Here is a 95-residue protein sequence, read N- to C-terminus: Pyrimidine/purine nucleoside phosphorylase (95 aa).

Belongs to the nucleoside phosphorylase PpnP family.

The enzyme catalyses a purine D-ribonucleoside + phosphate = a purine nucleobase + alpha-D-ribose 1-phosphate. It catalyses the reaction adenosine + phosphate = alpha-D-ribose 1-phosphate + adenine. It carries out the reaction cytidine + phosphate = cytosine + alpha-D-ribose 1-phosphate. The catalysed reaction is guanosine + phosphate = alpha-D-ribose 1-phosphate + guanine. The enzyme catalyses inosine + phosphate = alpha-D-ribose 1-phosphate + hypoxanthine. It catalyses the reaction thymidine + phosphate = 2-deoxy-alpha-D-ribose 1-phosphate + thymine. It carries out the reaction uridine + phosphate = alpha-D-ribose 1-phosphate + uracil. The catalysed reaction is xanthosine + phosphate = alpha-D-ribose 1-phosphate + xanthine. Catalyzes the phosphorolysis of diverse nucleosides, yielding D-ribose 1-phosphate and the respective free bases. Can use uridine, adenosine, guanosine, cytidine, thymidine, inosine and xanthosine as substrates. Also catalyzes the reverse reactions. The protein is Pyrimidine/purine nucleoside phosphorylase of Edwardsiella ictaluri (strain 93-146).